Consider the following 406-residue polypeptide: 26S proteasome regulatory subunit 8 (406 aa).

Ala-2 bears the N-acetylalanine mark. Ser-120 is subject to Phosphoserine. Positions 186-406 (VLLYGPPGTG…KNMSIKKLWK (221 aa)) are may mediate interaction with PRPF9. An ATP-binding site is contributed by 190–197 (GPPGTGKT). Lys-222 carries the post-translational modification N6-acetyllysine.

It belongs to the AAA ATPase family. Component of the 19S proteasome regulatory particle complex. The 26S proteasome consists of a 20S core particle (CP) and two 19S regulatory subunits (RP). The regulatory particle is made of a lid composed of 9 subunits, a base containing 6 ATPases including PSMC5 and few additional components. Component of a complex with USP49 and RUVBL1. Interacts with PRPF19. Interacts with TRIM5. Interacts with NDC80. Interacts with PAAF1. Interacts, in vitro, with the thyroid hormone receptor (in a thyroid hormone T3-dependent manner) and with retinoid X receptor (RXR). Interacts with ERCC6.

It localises to the cytoplasm. The protein resides in the nucleus. In terms of biological role, component of the 26S proteasome, a multiprotein complex involved in the ATP-dependent degradation of ubiquitinated proteins. This complex plays a key role in the maintenance of protein homeostasis by removing misfolded or damaged proteins, which could impair cellular functions, and by removing proteins whose functions are no longer required. Therefore, the proteasome participates in numerous cellular processes, including cell cycle progression, apoptosis, or DNA damage repair. PSMC5 belongs to the heterohexameric ring of AAA (ATPases associated with diverse cellular activities) proteins that unfolds ubiquitinated target proteins that are concurrently translocated into a proteolytic chamber and degraded into peptides. In Bos taurus (Bovine), this protein is 26S proteasome regulatory subunit 8 (PSMC5).